The primary structure comprises 323 residues: ATP synthase gamma chain (323 aa).

It belongs to the ATPase gamma chain family. F-type ATPases have 2 components, CF(1) - the catalytic core - and CF(0) - the membrane proton channel. CF(1) has five subunits: alpha(3), beta(3), gamma(1), delta(1), epsilon(1). CF(0) has three main subunits: a, b and c.

It is found in the cell inner membrane. In terms of biological role, produces ATP from ADP in the presence of a proton gradient across the membrane. The gamma chain is believed to be important in regulating ATPase activity and the flow of protons through the CF(0) complex. This Rickettsia peacockii (strain Rustic) protein is ATP synthase gamma chain.